Consider the following 653-residue polypeptide: Chromosomal replication initiator protein DnaA (653 aa).

The segment at 1-100 (MADVPADLAA…SAGEPPASAS (100 aa)) is domain I, interacts with DnaA modulators. A disordered region spans residues 86–310 (ITVDDSAGEP…PAPATGPGEP (225 aa)). The interval 101–312 (PAPPRYEEPE…PATGPGEPTA (212 aa)) is domain II. Basic and acidic residues-rich tracts occupy residues 120-150 (DPYE…DRHQ) and 221-267 (PSYD…RRNI). Positions 284–310 (GSALPASSGAPGPLAAQPAPATGPGEP) are enriched in low complexity. The segment at 313-529 (RLNPKYLFDT…GALIRVTAFA (217 aa)) is domain III, AAA+ region. ATP is bound by residues glycine 357, glycine 359, lysine 360, and threonine 361. Residues 530–653 (SLNRQPVDLG…TELTNRIKNG (124 aa)) form a domain IV, binds dsDNA region.

It belongs to the DnaA family. Oligomerizes as a right-handed, spiral filament on DNA at oriC.

It localises to the cytoplasm. Plays an essential role in the initiation and regulation of chromosomal replication. ATP-DnaA binds to the origin of replication (oriC) to initiate formation of the DNA replication initiation complex once per cell cycle. Binds the DnaA box (a 9 base pair repeat at the origin) and separates the double-stranded (ds)DNA. Forms a right-handed helical filament on oriC DNA; dsDNA binds to the exterior of the filament while single-stranded (ss)DNA is stabiized in the filament's interior. The ATP-DnaA-oriC complex binds and stabilizes one strand of the AT-rich DNA unwinding element (DUE), permitting loading of DNA polymerase. After initiation quickly degrades to an ADP-DnaA complex that is not apt for DNA replication. Binds acidic phospholipids. The protein is Chromosomal replication initiator protein DnaA of Streptomyces avermitilis (strain ATCC 31267 / DSM 46492 / JCM 5070 / NBRC 14893 / NCIMB 12804 / NRRL 8165 / MA-4680).